Consider the following 572-residue polypeptide: Cell cycle protein kinase DBF2 (572 aa).

Phosphoserine occurs at positions 17, 20, and 74. A Protein kinase domain is found at 177–477; that stretch reads FEMITQVGQG…FEHVKRMSYF (301 aa). Residues 183-191 and Lys-206 each bind ATP; that span reads VGQGGYGQV. Asp-300 serves as the catalytic Proton acceptor. Ser-374 carries the phosphoserine; by CDC15 modification. The AGC-kinase C-terminal domain maps to 478–555; sequence ADINFSTLRS…RHRNGKQGSS (78 aa). Thr-544 bears the Phosphothreonine; by CDC15 mark.

It belongs to the protein kinase superfamily. Ser/Thr protein kinase family. Interacts with MOB1. MOB1-binding is required for a late mitotic event. Post-translationally, phosphorylation of Ser-374 and Thr-544 by CDC15 is essential for activation of DBF2 kinase activity.

It is found in the cytoplasm. It localises to the cytoskeleton. The protein localises to the microtubule organizing center. Its subcellular location is the spindle pole body. The protein resides in the bud neck. It is found in the nucleus. The catalysed reaction is L-seryl-[protein] + ATP = O-phospho-L-seryl-[protein] + ADP + H(+). The enzyme catalyses L-threonyl-[protein] + ATP = O-phospho-L-threonyl-[protein] + ADP + H(+). Kinase activity is regulated by BUB2, CDC15 and CDC5, and is maximal during nuclear division. CDK1 kinase inhibits cellular DBF2-MOB1 kinase activity via phosphorylation of both CDC15 and MOB1. Functionally, ser/Thr-protein kinase involved in the mitotic exit network (MEN) and required after the metaphase to anaphase cell cycle transition. Phosphorylates CHS2 to regulate its dynamics and chitin synthesis at the division site during cytokinesis. Coordinates septin and actomyosin ring (AMR) functions during cytokinesis through the phosphorylation of HOF1. In complex with MOB1, phosphorylates CDC14 at sites adjacent to its nuclear localization sequence, thereby retaining CDC14 in the cytoplasm. Also binds to SWI5 and CLB2 mRNAs cotranscriptionally to regulate their decay. In the nucleus, the DBF2-MOB1 complex regulates passenger protein localization during anaphase. Mediates sorbic acid stress tolerance through promoting vacuolar H(+)-ATPase function, probably through phosphorylation of VMA1 and VMA2 subunits. The polypeptide is Cell cycle protein kinase DBF2 (DBF2) (Saccharomyces cerevisiae (strain ATCC 204508 / S288c) (Baker's yeast)).